The chain runs to 552 residues: CTP synthase (552 aa).

Residues 1–270 are amidoligase domain; sequence MTKFVFVTGG…DGLICDKLRL (270 aa). Ser-13 contributes to the CTP binding site. Ser-13 contacts UTP. ATP is bound by residues 14–19 and Asp-71; that span reads SLGKGI. Residues Asp-71 and Glu-144 each contribute to the Mg(2+) site. Residues 151–153, 191–196, and Lys-227 each bind CTP; these read DIE and KTKPTQ. Residues 191 to 196 and Lys-227 contribute to the UTP site; that span reads KTKPTQ. One can recognise a Glutamine amidotransferase type-1 domain in the interval 295-548; it reads KIAMVGKYVE…VKAAIERQKA (254 aa). Gly-357 is a binding site for L-glutamine. Residue Cys-384 is the Nucleophile; for glutamine hydrolysis of the active site. Residues 385–388, Glu-408, and Arg-474 contribute to the L-glutamine site; that span reads LGMQ. Residues His-521 and Glu-523 contribute to the active site.

The protein belongs to the CTP synthase family. Homotetramer.

It carries out the reaction UTP + L-glutamine + ATP + H2O = CTP + L-glutamate + ADP + phosphate + 2 H(+). It catalyses the reaction L-glutamine + H2O = L-glutamate + NH4(+). The catalysed reaction is UTP + NH4(+) + ATP = CTP + ADP + phosphate + 2 H(+). It participates in pyrimidine metabolism; CTP biosynthesis via de novo pathway; CTP from UDP: step 2/2. With respect to regulation, allosterically activated by GTP, when glutamine is the substrate; GTP has no effect on the reaction when ammonia is the substrate. The allosteric effector GTP functions by stabilizing the protein conformation that binds the tetrahedral intermediate(s) formed during glutamine hydrolysis. Inhibited by the product CTP, via allosteric rather than competitive inhibition. Functionally, catalyzes the ATP-dependent amination of UTP to CTP with either L-glutamine or ammonia as the source of nitrogen. Regulates intracellular CTP levels through interactions with the four ribonucleotide triphosphates. The chain is CTP synthase from Delftia acidovorans (strain DSM 14801 / SPH-1).